The sequence spans 303 residues: ATP phosphoribosyltransferase (303 aa).

Belongs to the ATP phosphoribosyltransferase family. Long subfamily. Requires Mg(2+) as cofactor.

The protein localises to the cytoplasm. It catalyses the reaction 1-(5-phospho-beta-D-ribosyl)-ATP + diphosphate = 5-phospho-alpha-D-ribose 1-diphosphate + ATP. It participates in amino-acid biosynthesis; L-histidine biosynthesis; L-histidine from 5-phospho-alpha-D-ribose 1-diphosphate: step 1/9. With respect to regulation, feedback inhibited by histidine. In terms of biological role, catalyzes the condensation of ATP and 5-phosphoribose 1-diphosphate to form N'-(5'-phosphoribosyl)-ATP (PR-ATP). Has a crucial role in the pathway because the rate of histidine biosynthesis seems to be controlled primarily by regulation of HisG enzymatic activity. This chain is ATP phosphoribosyltransferase, found in Haemophilus influenzae (strain 86-028NP).